Here is a 122-residue protein sequence, read N- to C-terminus: MDRSQALYYPWDSFCLLSRCSIFILSTTLEDSRTLLSHLGLQNPHEVQGTFVPEARVPGVRLEATAGHQSLSEPSGWVYYRHKHSDLVDPADLHLQGASYRRSTIRSYLMVKKVLYLVSSAP.

Its function is as follows. Part of the gene cluster that mediates the biosynthesis of elsinochromes, pigments consisting of at least four interconvertible tautomers (A, B, C and D) that have a core phenolic quinone to which various side chains are attached and which play an important role in fungal pathogenesis. The non-reducing polyketide synthase PKS1 was proposed to iteratively catalyze decarboxylation between acetyl-CoA and malonyl-CoA subunits for polyketide chain elongation. The released polyketide undergoes cyclization to form an aromatic ring, and proceeds via serial modification steps to produce the heptaketide back- bone of elsinochrome. As elsinochrome has a symmetrical structure, two identical heptaketides are fused to form a core 1,2-dihydrobenzo-perylene ring structure, which can then be successively modified to produce the various derivatives of elsinochrome. Some of these reactions may be cooperatively carried out, at least in part, by the products of RDT1, OXR1 and PKS1. PRF1, embedded within the elsinochrome cluster possibly functions to stabilize some of the biosynthetic enzymes required for elsinochrome production. As prefoldin is a hexamer containing 2 a and 4 b subunits, additional prefoldin subunits, whose coding genes may not immediately link to the elsinochrome biosynthetic gene cluster, are required to fulfill the chaperone function. In addition, no methyltransferase-coding gene exists within the biosynthetic gene cluster, even though elsinochrome has four methyl groups at positions C3, C7, C8 and C12. Apparently, the identified gene cluster does not contain the entire entourage of genes responsible for elsinochrome biosynthesis. Once elsinochrome is synthesized, it must be exported outside the fungal cells, which is probably accomplished by the ECT1 transporter, to avoid toxicity. The polypeptide is Elsinochromes biosynthesis cluster protein HP4 (Elsinoe fawcettii (Citrus scab fungus)).